The chain runs to 195 residues: MKYIFNRYNALLLRRPLITNMITTGLLVGGGDALAQFFFPNNDNNNLEQQPFDYLRNLRAIIYGSLIFAPIGDKWYKFLNTKVVWTRNAQKPQYQRSMSTLLRVMVDQLVFAPFIGIPLYYSSMTILENRQPFLDNIIDKFNTSWWITLKSNWLVWPLFQFFNFYLLPVQFRLLAVNIISIGWNTYLSYVMHSQK.

Transmembrane regions (helical) follow at residues 17 to 39, 59 to 78, 99 to 121, and 168 to 190; these read LITNMITTGLLVGGGDALAQFFF, RAIIYGSLIFAPIGDKWYKF, STLLRVMVDQLVFAPFIGIPLYY, and PVQFRLLAVNIISIGWNTYLSYV.

This sequence belongs to the peroxisomal membrane protein PXMP2/4 family.

The protein localises to the mitochondrion inner membrane. Its function is as follows. May be involved in cellular response to stress. Required to maintain mitochondrial DNA (mtDNA) integrity and stability. In Candida albicans (strain SC5314 / ATCC MYA-2876) (Yeast), this protein is Protein SYM1 (SYM1).